The primary structure comprises 433 residues: GTPase Der (433 aa).

EngA-type G domains follow at residues Lys5–Gly167 and Ile174–Glu349. GTP-binding positions include Gly11 to Ser18, Asp58 to Phe62, Asn119 to Asp122, Gly180 to Ser187, Asp227 to Ile231, and Ser292 to Asp295. In terms of domain architecture, KH-like spans Glu349–Ile429.

It belongs to the TRAFAC class TrmE-Era-EngA-EngB-Septin-like GTPase superfamily. EngA (Der) GTPase family. As to quaternary structure, associates with the 50S ribosomal subunit.

Its function is as follows. GTPase that plays an essential role in the late steps of ribosome biogenesis. In Borreliella burgdorferi (strain ATCC 35210 / DSM 4680 / CIP 102532 / B31) (Borrelia burgdorferi), this protein is GTPase Der.